The following is a 73-amino-acid chain: Large ribosomal subunit protein bL31 (73 aa).

Over residues K34–S43 the composition is skewed to basic and acidic residues. Residues K34–M54 form a disordered region.

Belongs to the bacterial ribosomal protein bL31 family. Type A subfamily. In terms of assembly, part of the 50S ribosomal subunit.

Its function is as follows. Binds the 23S rRNA. This is Large ribosomal subunit protein bL31 from Rhodopseudomonas palustris (strain BisA53).